The chain runs to 181 residues: ATP synthase subunit delta (181 aa).

This sequence belongs to the ATPase delta chain family. In terms of assembly, F-type ATPases have 2 components, F(1) - the catalytic core - and F(0) - the membrane proton channel. F(1) has five subunits: alpha(3), beta(3), gamma(1), delta(1), epsilon(1). F(0) has three main subunits: a(1), b(2) and c(10-14). The alpha and beta chains form an alternating ring which encloses part of the gamma chain. F(1) is attached to F(0) by a central stalk formed by the gamma and epsilon chains, while a peripheral stalk is formed by the delta and b chains.

It localises to the cell inner membrane. In terms of biological role, f(1)F(0) ATP synthase produces ATP from ADP in the presence of a proton or sodium gradient. F-type ATPases consist of two structural domains, F(1) containing the extramembraneous catalytic core and F(0) containing the membrane proton channel, linked together by a central stalk and a peripheral stalk. During catalysis, ATP synthesis in the catalytic domain of F(1) is coupled via a rotary mechanism of the central stalk subunits to proton translocation. Its function is as follows. This protein is part of the stalk that links CF(0) to CF(1). It either transmits conformational changes from CF(0) to CF(1) or is implicated in proton conduction. This is ATP synthase subunit delta from Hyphomonas neptunium (strain ATCC 15444).